A 665-amino-acid chain; its full sequence is RNA-directed RNA polymerase (665 aa).

The enzyme catalyses RNA(n) + a ribonucleoside 5'-triphosphate = RNA(n+1) + diphosphate. RNA-dependent RNA polymerase which replicates the viral genome. This chain is RNA-directed RNA polymerase, found in Atkinsonella hypoxylon (AhV).